Here is a 354-residue protein sequence, read N- to C-terminus: Protein RecA (354 aa).

65-72 (GPESSGKT) contacts ATP.

It belongs to the RecA family.

It localises to the cytoplasm. In terms of biological role, can catalyze the hydrolysis of ATP in the presence of single-stranded DNA, the ATP-dependent uptake of single-stranded DNA by duplex DNA, and the ATP-dependent hybridization of homologous single-stranded DNAs. It interacts with LexA causing its activation and leading to its autocatalytic cleavage. The protein is Protein RecA of Pseudomonas syringae pv. syringae (strain B728a).